Consider the following 327-residue polypeptide: Undecaprenyl-phosphate 4-deoxy-4-formamido-L-arabinose transferase (327 aa).

Residues 1–235 lie on the Cytoplasmic side of the membrane; sequence MFDAAPIKKV…TCLTTTPLRL (235 aa). The helical transmembrane segment at 236-256 threads the bilayer; it reads LSLLGSVIAIGGFSLSVLLIV. At 257–269 the chain is on the periplasmic side; the sequence is LRLALGPQWAAEG. A helical membrane pass occupies residues 270–290; that stretch reads VFMLFAVLFTFIGAQFIGMGL. Over 291–327 the chain is Cytoplasmic; it reads LGEYIGRIYNDVRARPRYFVQQVIYPESTPFTEESHQ.

It belongs to the glycosyltransferase 2 family.

It is found in the cell inner membrane. The catalysed reaction is UDP-4-deoxy-4-formamido-beta-L-arabinose + di-trans,octa-cis-undecaprenyl phosphate = 4-deoxy-4-formamido-alpha-L-arabinopyranosyl di-trans,octa-cis-undecaprenyl phosphate + UDP. The protein operates within glycolipid biosynthesis; 4-amino-4-deoxy-alpha-L-arabinose undecaprenyl phosphate biosynthesis; 4-amino-4-deoxy-alpha-L-arabinose undecaprenyl phosphate from UDP-4-deoxy-4-formamido-beta-L-arabinose and undecaprenyl phosphate: step 1/2. Its pathway is bacterial outer membrane biogenesis; lipopolysaccharide biosynthesis. Catalyzes the transfer of 4-deoxy-4-formamido-L-arabinose from UDP to undecaprenyl phosphate. The modified arabinose is attached to lipid A and is required for resistance to polymyxin and cationic antimicrobial peptides. In Salmonella choleraesuis (strain SC-B67), this protein is Undecaprenyl-phosphate 4-deoxy-4-formamido-L-arabinose transferase.